The primary structure comprises 348 residues: MTEFFQTLGMNYEWAWFTATIAGILLIALPVMLAVAMVIYVDRKVLGAIMLRRGPNVVGPFGLLQSFADGLKVFLQETIIPSAANKGIFLLAPIVTFVVALVAWAVIPFGDGMVLADINVGLLYVLAISSLGVYGIVMAGWASNSKYPFFSAMRAAAQMISYEVSIGFILICVVLWAGTFNLSEIVEAQRGHGLGIVNGYFFNILLFPMWVLFFISCLAETQRAPFDLTEAESELVAGYQTEYSSMSFALFWLGEYANILLLCSLNTVLFFGGWLPPIDWAPLYYVPGFLWFLIKTFLFFFMFSWIWATVPRYRYDQLMRLGWKVFLPMSLLFVFLISGYLMATGHYG.

8 helical membrane-spanning segments follow: residues 21–41 (IAGI…VIYV), 87–107 (GIFL…WAVI), 120–140 (VGLL…VMAG), 166–186 (IGFI…SEIV), 195–215 (GIVN…LFFI), 258–278 (NILL…LPPI), 288–308 (GFLW…WIWA), and 325–345 (VFLP…MATG).

It belongs to the complex I subunit 1 family. NDH-1 is composed of 14 different subunits. Subunits NuoA, H, J, K, L, M, N constitute the membrane sector of the complex.

It localises to the cell inner membrane. The enzyme catalyses a quinone + NADH + 5 H(+)(in) = a quinol + NAD(+) + 4 H(+)(out). In terms of biological role, NDH-1 shuttles electrons from NADH, via FMN and iron-sulfur (Fe-S) centers, to quinones in the respiratory chain. The immediate electron acceptor for the enzyme in this species is believed to be ubiquinone. Couples the redox reaction to proton translocation (for every two electrons transferred, four hydrogen ions are translocated across the cytoplasmic membrane), and thus conserves the redox energy in a proton gradient. This subunit may bind ubiquinone. This is NADH-quinone oxidoreductase subunit H from Erythrobacter litoralis (strain HTCC2594).